The chain runs to 247 residues: Adenosylcobinamide-GDP ribazoletransferase (247 aa).

Transmembrane regions (helical) follow at residues isoleucine 34–valine 54, cysteine 59–phenylalanine 79, glycine 113–leucine 133, isoleucine 138–tyrosine 158, and valine 194–isoleucine 214.

The protein belongs to the CobS family. The cofactor is Mg(2+).

The protein resides in the cell inner membrane. The catalysed reaction is alpha-ribazole + adenosylcob(III)inamide-GDP = adenosylcob(III)alamin + GMP + H(+). The enzyme catalyses alpha-ribazole 5'-phosphate + adenosylcob(III)inamide-GDP = adenosylcob(III)alamin 5'-phosphate + GMP + H(+). It functions in the pathway cofactor biosynthesis; adenosylcobalamin biosynthesis; adenosylcobalamin from cob(II)yrinate a,c-diamide: step 7/7. Functionally, joins adenosylcobinamide-GDP and alpha-ribazole to generate adenosylcobalamin (Ado-cobalamin). Also synthesizes adenosylcobalamin 5'-phosphate from adenosylcobinamide-GDP and alpha-ribazole 5'-phosphate. The protein is Adenosylcobinamide-GDP ribazoletransferase of Shigella boydii serotype 4 (strain Sb227).